A 185-amino-acid polypeptide reads, in one-letter code: MINDIKKQSEQKMKKSMEALGHAFAKIRTGRANPAILESVMVSYYGTDTPLTQIANVVVEDARTLSVTPWEKNMVPQIEKAILKSDLGLNPSTAGTVIRVPMPALTEETRKELVKTARGEAENTRVAIRNLRRDANADIKTLLKDKEISEDEEKRGLDDIQKLTDKYIAEVDRVLAEKEKDLMAV.

This sequence belongs to the RRF family.

Its subcellular location is the cytoplasm. Its function is as follows. Responsible for the release of ribosomes from messenger RNA at the termination of protein biosynthesis. May increase the efficiency of translation by recycling ribosomes from one round of translation to another. The chain is Ribosome-recycling factor from Hahella chejuensis (strain KCTC 2396).